A 362-amino-acid polypeptide reads, in one-letter code: Phosphoserine aminotransferase (362 aa).

R43 is an L-glutamate binding site. Residues 77–78, W103, T153, D173, and Q196 contribute to the pyridoxal 5'-phosphate site; that span reads AT. K197 is subject to N6-(pyridoxal phosphate)lysine. 238–239 provides a ligand contact to pyridoxal 5'-phosphate; it reads NT.

It belongs to the class-V pyridoxal-phosphate-dependent aminotransferase family. SerC subfamily. Homodimer. It depends on pyridoxal 5'-phosphate as a cofactor.

The protein resides in the cytoplasm. It carries out the reaction O-phospho-L-serine + 2-oxoglutarate = 3-phosphooxypyruvate + L-glutamate. The enzyme catalyses 4-(phosphooxy)-L-threonine + 2-oxoglutarate = (R)-3-hydroxy-2-oxo-4-phosphooxybutanoate + L-glutamate. Its pathway is amino-acid biosynthesis; L-serine biosynthesis; L-serine from 3-phospho-D-glycerate: step 2/3. The protein operates within cofactor biosynthesis; pyridoxine 5'-phosphate biosynthesis; pyridoxine 5'-phosphate from D-erythrose 4-phosphate: step 3/5. Its function is as follows. Catalyzes the reversible conversion of 3-phosphohydroxypyruvate to phosphoserine and of 3-hydroxy-2-oxo-4-phosphonooxybutanoate to phosphohydroxythreonine. This is Phosphoserine aminotransferase from Xylella fastidiosa (strain Temecula1 / ATCC 700964).